The sequence spans 228 residues: Aquaporin Z 2 (228 aa).

Transmembrane regions (helical) follow at residues 9-29 (FFGT…AAAF) and 34-54 (IGFT…AYAV). The short motif at 63 to 65 (NPA) is the NPA 1 element. The next 3 membrane-spanning stretches (helical) occupy residues 82–102 (VPYV…LYVI), 129–149 (LVSA…VILG), and 158–178 (GFAP…SIPV). The NPA 2 motif lies at 184–186 (NPA). The helical transmembrane segment at 204-224 (WLFWLAPIVGGAAGAVIWKLF) threads the bilayer.

Belongs to the MIP/aquaporin (TC 1.A.8) family. Homotetramer.

Its subcellular location is the cell inner membrane. The catalysed reaction is H2O(in) = H2O(out). In terms of biological role, channel that permits osmotically driven movement of water in both directions. It is involved in the osmoregulation and in the maintenance of cell turgor during volume expansion in rapidly growing cells. It mediates rapid entry or exit of water in response to abrupt changes in osmolarity. This chain is Aquaporin Z 2, found in Agrobacterium fabrum (strain C58 / ATCC 33970) (Agrobacterium tumefaciens (strain C58)).